Consider the following 138-residue polypeptide: MAQAKKGGTAAKKGQKTRRREKKNVPHGAAHIKSTFNNTIVSITDPQGNVIAWASSGHVGFKGSRKSTPFAAQLAAENAARKAQEHGVKKVDVFVKGPGSGRETAIRSLQAAGLEVGTISDVTPQPHNGCRPPKRRRV.

A compositionally biased stretch (low complexity) spans 1–12; it reads MAQAKKGGTAAK. 2 disordered regions span residues 1–32 and 119–138; these read MAQA…AAHI and ISDV…RRRV. Residues 13-22 are compositionally biased toward basic residues; that stretch reads KGQKTRRREK.

This sequence belongs to the universal ribosomal protein uS11 family. Part of the 30S ribosomal subunit. Interacts with proteins S7 and S18. Binds to IF-3.

In terms of biological role, located on the platform of the 30S subunit, it bridges several disparate RNA helices of the 16S rRNA. Forms part of the Shine-Dalgarno cleft in the 70S ribosome. This chain is Small ribosomal subunit protein uS11, found in Mycolicibacterium smegmatis (strain ATCC 700084 / mc(2)155) (Mycobacterium smegmatis).